A 123-amino-acid chain; its full sequence is DPEP2 neighbor protein (123 aa).

The disordered stretch occupies residues 67–123; the sequence is APLATPTKAEAEKPAPRRAPKRRQATIESDKDLGCSSPKIRRLEHRGRRLTPQKLAG. A compositionally biased stretch (basic residues) spans 105–117; the sequence is KIRRLEHRGRRLT.

This is DPEP2 neighbor protein from Homo sapiens (Human).